The sequence spans 222 residues: Pleckstrin homology domain-containing family B member 2 (222 aa).

One can recognise a PH domain in the interval 2–109 (AFVKSGWLLR…WKFTLQDSRT (108 aa)). A 1,2-diacyl-sn-glycero-3-phospho-L-serine is bound at residue lysine 20.

Its subcellular location is the recycling endosome membrane. Functionally, involved in retrograde transport of recycling endosomes. The chain is Pleckstrin homology domain-containing family B member 2 (PLEKHB2) from Pongo abelii (Sumatran orangutan).